An 800-amino-acid polypeptide reads, in one-letter code: DNA topoisomerase 4 subunit A (800 aa).

The Topo IIA-type catalytic domain occupies 31 to 495 (LPDVRDGLKP…EIEEIKIDKE (465 aa)). The active-site O-(5'-phospho-DNA)-tyrosine intermediate is Y119.

This sequence belongs to the type II topoisomerase GyrA/ParC subunit family. ParC type 2 subfamily. In terms of assembly, heterotetramer composed of ParC and ParE.

It localises to the cell membrane. It catalyses the reaction ATP-dependent breakage, passage and rejoining of double-stranded DNA.. Its function is as follows. Topoisomerase IV is essential for chromosome segregation. It relaxes supercoiled DNA. Performs the decatenation events required during the replication of a circular DNA molecule. This Staphylococcus aureus (strain Mu50 / ATCC 700699) protein is DNA topoisomerase 4 subunit A.